A 437-amino-acid chain; its full sequence is O-methyltransferase 3 (437 aa).

The segment at 1–21 is disordered; it reads MNNKTSNGDITNDEPTVGSKR. A coiled-coil region spans residues 146–180; the sequence is SDNLYQDKDDLEKQEKEREKKMANLLSKNVDIKEL. The tract at residues 408 to 437 is disordered; sequence DPINNNNNNNNNNNNNNNNTTTTTSTTTTN. The span at 411 to 437 shows a compositional bias: low complexity; sequence NNNNNNNNNNNNNNNNTTTTTSTTTTN.

Belongs to the methyltransferase superfamily. METL family.

In terms of biological role, probable methyltransferase. This Dictyostelium discoideum (Social amoeba) protein is O-methyltransferase 3 (omt3).